The chain runs to 354 residues: Ferrochelatase (354 aa).

Positions 191 and 271 each coordinate Fe cation.

Belongs to the ferrochelatase family.

The protein localises to the cytoplasm. It carries out the reaction heme b + 2 H(+) = protoporphyrin IX + Fe(2+). Its pathway is porphyrin-containing compound metabolism; protoheme biosynthesis; protoheme from protoporphyrin-IX: step 1/1. Its function is as follows. Catalyzes the ferrous insertion into protoporphyrin IX. This Rickettsia bellii (strain OSU 85-389) protein is Ferrochelatase.